A 393-amino-acid polypeptide reads, in one-letter code: Lipid-A-disaccharide synthase (393 aa).

The protein belongs to the LpxB family.

It carries out the reaction a lipid X + a UDP-2-N,3-O-bis[(3R)-3-hydroxyacyl]-alpha-D-glucosamine = a lipid A disaccharide + UDP + H(+). It participates in bacterial outer membrane biogenesis; LPS lipid A biosynthesis. In terms of biological role, condensation of UDP-2,3-diacylglucosamine and 2,3-diacylglucosamine-1-phosphate to form lipid A disaccharide, a precursor of lipid A, a phosphorylated glycolipid that anchors the lipopolysaccharide to the outer membrane of the cell. This Granulibacter bethesdensis (strain ATCC BAA-1260 / CGDNIH1) protein is Lipid-A-disaccharide synthase.